Reading from the N-terminus, the 292-residue chain is Rhodanese-like domain-containing protein 11, chloroplastic (292 aa).

The N-terminal 56 residues, 1-56, are a transit peptide targeting the chloroplast; that stretch reads MESLSLPVLNPLLASGSNLFRNQHSRMTSSMVSSLKSPIGGTSLSTVRRFGVGVVR. A Rhodanese domain is found at 101–224; the sequence is SLSNKPLLDV…AQDEDLVTEG (124 aa). Catalysis depends on C184, which acts as the Cysteine persulfide intermediate.

It is found in the plastid. The protein resides in the chloroplast. The protein is Rhodanese-like domain-containing protein 11, chloroplastic (STR11) of Arabidopsis thaliana (Mouse-ear cress).